A 650-amino-acid chain; its full sequence is Acetyl-coenzyme A synthetase (650 aa).

Residues 191-194, T311, and N335 contribute to the CoA site; that span reads RAGR. ATP is bound by residues 387–389, 411–416, D500, and R515; these read GEP and DTWWQT. S523 lines the CoA pocket. R526 provides a ligand contact to ATP. Residues V537, H539, and V542 each coordinate Mg(2+). R584 contributes to the CoA binding site. K609 carries the N6-acetyllysine modification.

This sequence belongs to the ATP-dependent AMP-binding enzyme family. Mg(2+) serves as cofactor. Acetylated. Deacetylation by the SIR2-homolog deacetylase activates the enzyme.

The enzyme catalyses acetate + ATP + CoA = acetyl-CoA + AMP + diphosphate. Functionally, catalyzes the conversion of acetate into acetyl-CoA (AcCoA), an essential intermediate at the junction of anabolic and catabolic pathways. AcsA undergoes a two-step reaction. In the first half reaction, AcsA combines acetate with ATP to form acetyl-adenylate (AcAMP) intermediate. In the second half reaction, it can then transfer the acetyl group from AcAMP to the sulfhydryl group of CoA, forming the product AcCoA. This is Acetyl-coenzyme A synthetase from Shewanella halifaxensis (strain HAW-EB4).